The primary structure comprises 318 residues: Cytochrome c biogenesis protein CcsA (318 aa).

Transmembrane regions (helical) follow at residues 17-37, 45-65, 75-95, 104-124, 149-169, 224-244, 258-275, and 287-307; these read VLAL…ISFW, SAVV…QLVL, ISNL…AQLL, IVSA…SFAL, VIMC…AVLF, TITV…VWAN, TWAL…HTRF, and VAVA…LLGI.

Belongs to the CcmF/CycK/Ccl1/NrfE/CcsA family. In terms of assembly, may interact with ccs1.

The protein resides in the cellular thylakoid membrane. Functionally, required during biogenesis of c-type cytochromes (cytochrome c6 and cytochrome f) at the step of heme attachment. The sequence is that of Cytochrome c biogenesis protein CcsA from Prochlorococcus marinus (strain MIT 9313).